Here is a 222-residue protein sequence, read N- to C-terminus: Ribosomal RNA small subunit methyltransferase G (222 aa).

Residues Gly82, Leu87, Ala132–Glu133, and Arg150 each bind S-adenosyl-L-methionine.

It belongs to the methyltransferase superfamily. RNA methyltransferase RsmG family.

The protein resides in the cytoplasm. Specifically methylates the N7 position of guanine in position 518 of 16S rRNA. This chain is Ribosomal RNA small subunit methyltransferase G, found in Corynebacterium jeikeium (strain K411).